A 372-amino-acid chain; its full sequence is Chaperone protein DnaJ (372 aa).

The J domain maps to aspartate 5 to glycine 70. The CR-type zinc finger occupies glycine 133–histidine 211. Cysteine 146, cysteine 149, cysteine 163, cysteine 166, cysteine 185, cysteine 188, cysteine 199, and cysteine 202 together coordinate Zn(2+). 4 CXXCXGXG motif repeats span residues cysteine 146 to glycine 153, cysteine 163 to glycine 170, cysteine 185 to glycine 192, and cysteine 199 to glycine 206.

This sequence belongs to the DnaJ family. In terms of assembly, homodimer. The cofactor is Zn(2+).

Its subcellular location is the cytoplasm. Functionally, participates actively in the response to hyperosmotic and heat shock by preventing the aggregation of stress-denatured proteins and by disaggregating proteins, also in an autonomous, DnaK-independent fashion. Unfolded proteins bind initially to DnaJ; upon interaction with the DnaJ-bound protein, DnaK hydrolyzes its bound ATP, resulting in the formation of a stable complex. GrpE releases ADP from DnaK; ATP binding to DnaK triggers the release of the substrate protein, thus completing the reaction cycle. Several rounds of ATP-dependent interactions between DnaJ, DnaK and GrpE are required for fully efficient folding. Also involved, together with DnaK and GrpE, in the DNA replication of plasmids through activation of initiation proteins. The chain is Chaperone protein DnaJ from Thiobacillus denitrificans (strain ATCC 25259 / T1).